A 255-amino-acid chain; its full sequence is 5-oxoprolinase subunit A (255 aa).

Belongs to the LamB/PxpA family. As to quaternary structure, forms a complex composed of PxpA, PxpB and PxpC.

The catalysed reaction is 5-oxo-L-proline + ATP + 2 H2O = L-glutamate + ADP + phosphate + H(+). In terms of biological role, catalyzes the cleavage of 5-oxoproline to form L-glutamate coupled to the hydrolysis of ATP to ADP and inorganic phosphate. In Corynebacterium efficiens (strain DSM 44549 / YS-314 / AJ 12310 / JCM 11189 / NBRC 100395), this protein is 5-oxoprolinase subunit A.